The sequence spans 1960 residues: Transcription factor 20 (1960 aa).

Residues M1–P18 show a composition bias toward polar residues. A disordered region spans residues M1–Q287. Residues G42–R60 are compositionally biased toward gly residues. At R60 the chain carries Omega-N-methylarginine. The segment covering G61–G75 has biased composition (low complexity). Positions Q122–G131 are enriched in polar residues. Residues S164–Q192 are compositionally biased toward low complexity. The segment covering P193–S219 has biased composition (polar residues). A compositionally biased stretch (low complexity) spans Q236 to S259. Polar residues-rich tracts occupy residues Y260–S270 and V277–Q287. A Glycyl lysine isopeptide (Lys-Gly) (interchain with G-Cter in SUMO2) cross-link involves residue K304. Disordered regions lie at residues I305–V328 and F360–T392. Composition is skewed to low complexity over residues P306–Q322 and S368–P388. S419 and S430 each carry phosphoserine. The disordered stretch occupies residues S476–K748. Composition is skewed to polar residues over residues S497 to E508 and L537 to T547. S538, S559, S574, and S583 each carry phosphoserine. The residue at position 602 (K602) is an N6-acetyllysine. Over residues R616 to Q628 the composition is skewed to basic and acidic residues. S640 carries the phosphoserine modification. The span at G665 to G677 shows a compositional bias: low complexity. Positions T693–P702 are enriched in polar residues. Residues K710, K733, K748, K823, K832, and K844 each participate in a glycyl lysine isopeptide (Lys-Gly) (interchain with G-Cter in SUMO2) cross-link. The span at E732 to K748 shows a compositional bias: basic and acidic residues. Phosphoserine is present on S871. Residues K920 and K922 each participate in a glycyl lysine isopeptide (Lys-Gly) (interchain with G-Cter in SUMO2) cross-link. The segment at K920–M1037 is disordered. K929 participates in a covalent cross-link: Glycyl lysine isopeptide (Lys-Gly) (interchain with G-Cter in SUMO1); alternate. K929 participates in a covalent cross-link: Glycyl lysine isopeptide (Lys-Gly) (interchain with G-Cter in SUMO2); alternate. Residues S936–K945 show a composition bias toward polar residues. Basic and acidic residues predominate over residues K946–Y961. K957 is covalently cross-linked (Glycyl lysine isopeptide (Lys-Gly) (interchain with G-Cter in SUMO2)). Residues S966 and S1005 each carry the phosphoserine modification. Residue K1015 forms a Glycyl lysine isopeptide (Lys-Gly) (interchain with G-Cter in SUMO2) linkage. R1024 is subject to Omega-N-methylarginine. Residue S1053 is modified to Phosphoserine. Glycyl lysine isopeptide (Lys-Gly) (interchain with G-Cter in SUMO2) cross-links involve residues K1086, K1098, K1137, K1173, K1178, K1183, K1210, K1231, K1267, and K1274. Disordered stretches follow at residues A1110–G1142, R1162–L1285, and S1303–V1331. A compositionally biased stretch (basic and acidic residues) spans D1130 to G1142. A leucine-zipper region spans residues L1170–L1191. The Nuclear localization signal signature appears at R1254 to R1268. A compositionally biased stretch (basic and acidic residues) spans H1304 to K1318. S1305 carries the post-translational modification Phosphoserine. K1309 participates in a covalent cross-link: Glycyl lysine isopeptide (Lys-Gly) (interchain with G-Cter in SUMO2). A Phosphoserine modification is found at S1335. A Glycyl lysine isopeptide (Lys-Gly) (interchain with G-Cter in SUMO2) cross-link involves residue K1338. Phosphoserine is present on S1361. A disordered region spans residues D1384–P1607. Residues K1389, K1409, K1428, and K1446 each participate in a glycyl lysine isopeptide (Lys-Gly) (interchain with G-Cter in SUMO2) cross-link. Residues L1424 to A1451 are compositionally biased toward basic and acidic residues. A compositionally biased stretch (polar residues) spans M1464–G1477. K1510 is covalently cross-linked (Glycyl lysine isopeptide (Lys-Gly) (interchain with G-Cter in SUMO2)). The residue at position 1522 (S1522) is a Phosphoserine. K1524 participates in a covalent cross-link: Glycyl lysine isopeptide (Lys-Gly) (interchain with G-Cter in SUMO2). The a.T hook DNA-binding region spans G1537–K1551. Pro residues predominate over residues Q1555–I1566. The Nuclear localization signal motif lies at K1576–Q1600. The segment covering K1578–K1599 has biased composition (basic residues). Residue K1613 forms a Glycyl lysine isopeptide (Lys-Gly) (interchain with G-Cter in SUMO2) linkage. Disordered stretches follow at residues L1660–P1683 and T1732–E1839. S1669 bears the Phosphoserine mark. Residues T1671, T1762, and T1764 each carry the phosphothreonine modification. A Nuclear localization signal motif is present at residues R1785–S1792. Residues P1829–I1865 form a C2HC pre-PHD-type; degenerate zinc finger. Residues M1885–K1933 form a PHD-type zinc finger. The disordered stretch occupies residues P1939–G1960. Residues Q1944–G1960 show a composition bias toward polar residues.

Homodimer. Interacts with RNF4 and JUN. As to expression, expressed in most tissues, except in ovary and prostate. Isoform 1 is exclusively expressed in brain, heart and testis, and this form predominates in liver and kidney. Isoform 2 predominates in lung.

It is found in the nucleus. In terms of biological role, transcriptional activator that binds to the regulatory region of MMP3 and thereby controls stromelysin expression. It stimulates the activity of various transcriptional activators such as JUN, SP1, PAX6 and ETS1, suggesting a function as a coactivator. The chain is Transcription factor 20 (TCF20) from Homo sapiens (Human).